We begin with the raw amino-acid sequence, 111 residues long: Ig kappa chain V-III region PC 3741/TEPC 111 (111 aa).

The interval 1-23 (DIVLTQSPASLAVSLGQRATISC) is framework-1. C23 and C92 are joined by a disulfide. Residues 24-38 (RASESVDSYGNSFMH) are complementarity-determining-1. The tract at residues 39–53 (WYQQKPGQPPKLLIY) is framework-2. The tract at residues 54 to 60 (RASNLES) is complementarity-determining-2. A framework-3 region spans residues 61–92 (GIPARFSGSGSRTDFTLTINPVEADDVATYYC). The interval 93–101 (QQSNEDPYT) is complementarity-determining-3. Residues 102–111 (FGGGTKLEIK) form a framework-4 region.

The polypeptide is Ig kappa chain V-III region PC 3741/TEPC 111 (Mus musculus (Mouse)).